The primary structure comprises 1183 residues: DNA-directed RNA polymerase subunit beta (1183 aa).

The span at Asp1149–Ala1162 shows a compositional bias: acidic residues. Residues Asp1149–Asp1183 are disordered. A compositionally biased stretch (basic and acidic residues) spans Thr1163 to Asp1183.

Belongs to the RNA polymerase beta chain family. In terms of assembly, the RNAP catalytic core consists of 2 alpha, 1 beta, 1 beta' and 1 omega subunit. When a sigma factor is associated with the core the holoenzyme is formed, which can initiate transcription.

It catalyses the reaction RNA(n) + a ribonucleoside 5'-triphosphate = RNA(n+1) + diphosphate. In terms of biological role, DNA-dependent RNA polymerase catalyzes the transcription of DNA into RNA using the four ribonucleoside triphosphates as substrates. The protein is DNA-directed RNA polymerase subunit beta of Staphylococcus haemolyticus (strain JCSC1435).